The primary structure comprises 367 residues: Inhibin alpha chain (367 aa).

Positions 1–20 (MVPPLPLLLLLLLVPQGGHG) are cleaved as a signal peptide. A propeptide spanning residues 21-63 (CQGSELDREIVLAKVRALFLDALGPPAVTGEGGDPGVRRLPRR) is cleaved from the precursor. Positions 64–233 (HALGGFARRG…PPSGGERTRR (170 aa)) are cleaved as a propeptide — inhibin alpha N-terminal region. Residues N147 and N269 are each glycosylated (N-linked (GlcNAc...) asparagine). 3 disulfides stabilise this stretch: C263–C329, C292–C364, and C296–C366.

This sequence belongs to the TGF-beta family. As to quaternary structure, dimeric, linked by one or more disulfide bonds. Activin B is a dimer of alpha and beta-B. Inhibin A is a dimer of alpha and beta-A. Inhibin B is a dimer of alpha and beta-B. Interacts with TGFBR3L; this interaction regulates female fertility. Post-translationally, proteolytic processing yields a number of bioactive forms, consisting either solely of the mature alpha chain, of the most N-terminal propeptide linked through a disulfide bond to the mature alpha chain, or of the entire proprotein.

It is found in the secreted. Functionally, inhibins and activins inhibit and activate, respectively, the secretion of follitropin by the pituitary gland. Inhibins/activins are involved in regulating a number of diverse functions such as hypothalamic and pituitary hormone secretion, gonadal hormone secretion, germ cell development and maturation, erythroid differentiation, insulin secretion, nerve cell survival, embryonic axial development or bone growth, depending on their subunit composition. Inhibins appear to oppose the functions of activins. Its function is as follows. Inhibin A is a dimer of alpha/INHA and beta-A/INHBA that functions as a feedback regulator in the hypothalamic-pituitary-gonadal (HPG) axis. Inhibits the secretion of FSH from the anterior pituitary gland by acting on pituitary gonadotrope cells. Antagonizes activin A by binding to the proteoglycan, betaglycan, and forming a stable complex with and, thereby, sequestering type II activin receptors while excluding type I receptor. In terms of biological role, inhibin B is a dimer of alpha and beta-B that plays a crucial role in the regulation of the reproductive system by inhibiting the secretion of follicle-stimulating hormone (FSH) from the anterior pituitary gland. Thereby, maintains reproductive homeostasis in both males and females. Acts as a more potent suppressor of FSH release than inhibin A. Functions as competitive receptor antagonist binding activin type II receptors with high affinity in the presence of the TGF-beta type III coreceptor/TGFBR3L. In Equus caballus (Horse), this protein is Inhibin alpha chain (INHA).